Reading from the N-terminus, the 114-residue chain is MKQKRKTMESINSRLQLVMKSGKYVLGLKETLKVLRQGKAKLIIIANNTPALRKSEIEYYAMLAKTGVHHYSGNNIELGTACGKYFRVCTLAITDPGDSDIIRSMPAEDKGEAK.

The protein belongs to the eukaryotic ribosomal protein eL30 family.

This is Large ribosomal subunit protein eL30 (RPL30) from Branchiostoma belcheri (Amphioxus).